Reading from the N-terminus, the 366-residue chain is Chorismate synthase (366 aa).

Residue arginine 48 participates in NADP(+) binding. FMN is bound by residues 125 to 127 (RSS), 238 to 239 (NA), glycine 278, 293 to 297 (KPTSS), and arginine 319.

The protein belongs to the chorismate synthase family. Homotetramer. The cofactor is FMNH2.

The enzyme catalyses 5-O-(1-carboxyvinyl)-3-phosphoshikimate = chorismate + phosphate. It participates in metabolic intermediate biosynthesis; chorismate biosynthesis; chorismate from D-erythrose 4-phosphate and phosphoenolpyruvate: step 7/7. Catalyzes the anti-1,4-elimination of the C-3 phosphate and the C-6 proR hydrogen from 5-enolpyruvylshikimate-3-phosphate (EPSP) to yield chorismate, which is the branch point compound that serves as the starting substrate for the three terminal pathways of aromatic amino acid biosynthesis. This reaction introduces a second double bond into the aromatic ring system. The protein is Chorismate synthase of Alkalilimnicola ehrlichii (strain ATCC BAA-1101 / DSM 17681 / MLHE-1).